We begin with the raw amino-acid sequence, 431 residues long: Phosphoribosylamine--glycine ligase (431 aa).

Residues 107 to 315 (RWLMEEYKIP…LVEIGEEIVD (209 aa)) enclose the ATP-grasp domain. 134 to 193 (IDDFGRPVVVKPLGLTGGKGVKVVGYQLKDNEEAKAYAEELIKRDGKVLIEERTDGVEFT) contributes to the ATP binding site. 3 residues coordinate Mg(2+): Gln-273, Glu-285, and Asn-287. Residues Gln-273, Glu-285, and Asn-287 each contribute to the Mn(2+) site.

Belongs to the GARS family. Mg(2+) is required as a cofactor. It depends on Mn(2+) as a cofactor.

The catalysed reaction is 5-phospho-beta-D-ribosylamine + glycine + ATP = N(1)-(5-phospho-beta-D-ribosyl)glycinamide + ADP + phosphate + H(+). The protein operates within purine metabolism; IMP biosynthesis via de novo pathway; N(1)-(5-phospho-D-ribosyl)glycinamide from 5-phospho-alpha-D-ribose 1-diphosphate: step 2/2. The polypeptide is Phosphoribosylamine--glycine ligase (Thermococcus kodakarensis (strain ATCC BAA-918 / JCM 12380 / KOD1) (Pyrococcus kodakaraensis (strain KOD1))).